We begin with the raw amino-acid sequence, 219 residues long: uncharacterized protein (219 aa).

Residues 28 to 50 (IVSSLIAGGYALFVSAFTSYVYT) traverse the membrane as a helical segment. Residues 155–218 (EILRESLSEI…EEIEKELEFF (64 aa)) adopt a coiled-coil conformation.

It is found in the membrane. This is an uncharacterized protein from Aquifex aeolicus (strain VF5).